We begin with the raw amino-acid sequence, 194 residues long: HTH-type transcriptional regulator BetI (194 aa).

The HTH tetR-type domain maps to 8 to 68 (EIRRAQLIDA…ATMRHVLRDL (61 aa)). The segment at residues 31 to 50 (TLASVAQRANISTGIVSHYF) is a DNA-binding region (H-T-H motif).

It participates in amine and polyamine biosynthesis; betaine biosynthesis via choline pathway [regulation]. Its function is as follows. Repressor involved in the biosynthesis of the osmoprotectant glycine betaine. It represses transcription of the choline transporter BetT and the genes of BetAB involved in the synthesis of glycine betaine. In Burkholderia ambifaria (strain MC40-6), this protein is HTH-type transcriptional regulator BetI.